The chain runs to 427 residues: Glutamate-1-semialdehyde 2,1-aminomutase (427 aa).

Lys-265 carries the N6-(pyridoxal phosphate)lysine modification.

Belongs to the class-III pyridoxal-phosphate-dependent aminotransferase family. HemL subfamily. In terms of assembly, homodimer. It depends on pyridoxal 5'-phosphate as a cofactor.

Its subcellular location is the cytoplasm. The enzyme catalyses (S)-4-amino-5-oxopentanoate = 5-aminolevulinate. The protein operates within porphyrin-containing compound metabolism; protoporphyrin-IX biosynthesis; 5-aminolevulinate from L-glutamyl-tRNA(Glu): step 2/2. This is Glutamate-1-semialdehyde 2,1-aminomutase from Pseudomonas fluorescens (strain SBW25).